Here is a 139-residue protein sequence, read N- to C-terminus: Putative nickel-responsive regulator (139 aa).

4 residues coordinate Ni(2+): histidine 79, histidine 90, histidine 92, and cysteine 98.

This sequence belongs to the transcriptional regulatory CopG/NikR family. Ni(2+) serves as cofactor.

In terms of biological role, transcriptional regulator. The protein is Putative nickel-responsive regulator of Solidesulfovibrio magneticus (strain ATCC 700980 / DSM 13731 / RS-1) (Desulfovibrio magneticus).